The following is a 280-amino-acid chain: Cell division control protein 2 homolog B (280 aa).

Residues 1-5 and Lys20 contribute to the ATP site; that span reads AYGVV. The Protein kinase domain maps to 1–274; it reads AYGVVYKARD…AKKALEHEYF (274 aa). Tyr2 is subject to Phosphotyrosine. The active-site Proton acceptor is Asp114. Thr148 is modified (phosphothreonine; by CAK).

Belongs to the protein kinase superfamily. CMGC Ser/Thr protein kinase family. CDC2/CDKX subfamily.

It carries out the reaction L-seryl-[protein] + ATP = O-phospho-L-seryl-[protein] + ADP + H(+). The catalysed reaction is L-threonyl-[protein] + ATP = O-phospho-L-threonyl-[protein] + ADP + H(+). The enzyme catalyses [DNA-directed RNA polymerase] + ATP = phospho-[DNA-directed RNA polymerase] + ADP + H(+). Its activity is regulated as follows. Phosphorylation at Tyr-2 inactivates the enzyme, while phosphorylation at Thr-148 activates it. Plays a key role in the control of the eukaryotic cell cycle. The protein is Cell division control protein 2 homolog B (CDC2B) of Antirrhinum majus (Garden snapdragon).